A 302-amino-acid polypeptide reads, in one-letter code: Methionyl-tRNA formyltransferase (302 aa).

Residue 108-111 (SLLP) coordinates (6S)-5,6,7,8-tetrahydrofolate. Residues 276-288 (REGKRPMEPEEFL) are compositionally biased toward basic and acidic residues. The segment at 276–302 (REGKRPMEPEEFLRGFPLPEGSRAHTA) is disordered.

The protein belongs to the Fmt family.

It carries out the reaction L-methionyl-tRNA(fMet) + (6R)-10-formyltetrahydrofolate = N-formyl-L-methionyl-tRNA(fMet) + (6S)-5,6,7,8-tetrahydrofolate + H(+). Functionally, attaches a formyl group to the free amino group of methionyl-tRNA(fMet). The formyl group appears to play a dual role in the initiator identity of N-formylmethionyl-tRNA by promoting its recognition by IF2 and preventing the misappropriation of this tRNA by the elongation apparatus. The protein is Methionyl-tRNA formyltransferase of Cereibacter sphaeroides (strain KD131 / KCTC 12085) (Rhodobacter sphaeroides).